The following is a 209-amino-acid chain: Superoxide dismutase [Mn/Fe] (209 aa).

4 residues coordinate Fe(3+): H38, H90, D172, and H176. Residues H38, H90, D172, and H176 each contribute to the Mn(2+) site.

It belongs to the iron/manganese superoxide dismutase family. Mn(2+) serves as cofactor. Requires Fe(3+) as cofactor.

It catalyses the reaction 2 superoxide + 2 H(+) = H2O2 + O2. In terms of biological role, destroys superoxide anion radicals which are normally produced within the cells and which are toxic to biological systems. Catalyzes the dismutation of superoxide anion radicals into O2 and H2O2 by successive reduction and oxidation of the transition metal ion at the active site. The sequence is that of Superoxide dismutase [Mn/Fe] (sodB) from Rickettsia typhi (strain ATCC VR-144 / Wilmington).